Consider the following 254-residue polypeptide: Hydroxyacylglutathione hydrolase (254 aa).

The Zn(2+) site is built by His-54, His-56, Asp-58, His-59, His-111, Asp-130, and His-168.

It belongs to the metallo-beta-lactamase superfamily. Glyoxalase II family. As to quaternary structure, monomer. It depends on Zn(2+) as a cofactor.

The catalysed reaction is an S-(2-hydroxyacyl)glutathione + H2O = a 2-hydroxy carboxylate + glutathione + H(+). It functions in the pathway secondary metabolite metabolism; methylglyoxal degradation; (R)-lactate from methylglyoxal: step 2/2. Functionally, thiolesterase that catalyzes the hydrolysis of S-D-lactoyl-glutathione to form glutathione and D-lactic acid. The protein is Hydroxyacylglutathione hydrolase of Legionella pneumophila (strain Lens).